Here is a 239-residue protein sequence, read N- to C-terminus: Endonuclease V (239 aa).

Mg(2+) is bound by residues Asp-50 and Asp-118.

It belongs to the endonuclease V family. It depends on Mg(2+) as a cofactor.

The protein localises to the cytoplasm. The enzyme catalyses Endonucleolytic cleavage at apurinic or apyrimidinic sites to products with a 5'-phosphate.. Functionally, DNA repair enzyme involved in the repair of deaminated bases. Selectively cleaves double-stranded DNA at the second phosphodiester bond 3' to a deoxyinosine leaving behind the intact lesion on the nicked DNA. The protein is Endonuclease V of Xylella fastidiosa (strain 9a5c).